A 211-amino-acid chain; its full sequence is Glutathione S-transferase class-mu 28 kDa isozyme (211 aa).

The GST N-terminal domain maps to 4 to 86; it reads DHIKVIYFNG…YMAKKHHMMG (83 aa). Positions 10, 16, 41, 45, 53, 70, 71, and 104 each coordinate glutathione. One can recognise a GST C-terminal domain in the interval 88–211; it reads TEEEYYNVEK…YLSDRAATPF (124 aa).

It belongs to the GST superfamily. Mu family. In terms of assembly, homodimer.

The enzyme catalyses RX + glutathione = an S-substituted glutathione + a halide anion + H(+). In terms of biological role, conjugation of reduced glutathione to a wide number of exogenous and endogenous hydrophobic electrophiles. Its function is as follows. GST isoenzymes appear to play a central role in the parasite detoxification system. Other functions are also suspected including a role in increasing the solubility of haematin in the parasite gut. This Schistosoma haematobium (Blood fluke) protein is Glutathione S-transferase class-mu 28 kDa isozyme.